The sequence spans 548 residues: Chaperonin GroEL (548 aa).

Residues 30–33 (TLGP), Lys-51, 87–91 (DGTTT), Gly-415, 479–481 (NAA), and Asp-495 contribute to the ATP site. Positions 524–548 (LPKEDKSSDSSSSPAGGMGGMGGMM) are disordered. Over residues 539–548 (GGMGGMGGMM) the composition is skewed to gly residues.

This sequence belongs to the chaperonin (HSP60) family. As to quaternary structure, forms a cylinder of 14 subunits composed of two heptameric rings stacked back-to-back. Interacts with the co-chaperonin GroES.

It is found in the cytoplasm. The catalysed reaction is ATP + H2O + a folded polypeptide = ADP + phosphate + an unfolded polypeptide.. Its function is as follows. Together with its co-chaperonin GroES, plays an essential role in assisting protein folding. The GroEL-GroES system forms a nano-cage that allows encapsulation of the non-native substrate proteins and provides a physical environment optimized to promote and accelerate protein folding. The protein is Chaperonin GroEL of Buchnera aphidicola subsp. Acyrthosiphon pisum (strain Tuc7).